The sequence spans 86 residues: UPF0297 protein SAHV_1604 (86 aa).

It belongs to the UPF0297 family.

This is UPF0297 protein SAHV_1604 from Staphylococcus aureus (strain Mu3 / ATCC 700698).